Reading from the N-terminus, the 1003-residue chain is Putative helicase MOV-10 (1003 aa).

Lys148 bears the N6-acetyllysine mark. Thr160 and Thr254 each carry phosphothreonine. Ser432 is subject to Phosphoserine. 524 to 531 (GPPGTGKT) is a binding site for ATP. The DEAG box signature appears at 645 to 648 (DEAG). An interaction with AGO2 and APOBEC3G region spans residues 921-965 (NPLLLGHDPDWKVFLEFCKENGGYTGCPFPAKLDLQQGQNLLQGL). The disordered stretch occupies residues 968–1003 (LSPSTSGLKSHDYLPQEREGEEGLSLQVEPEWRNEL). Phosphoserine occurs at positions 969 and 977. A compositionally biased stretch (basic and acidic residues) spans 976 to 985 (KSHDYLPQER).

Belongs to the DNA2/NAM7 helicase family. SDE3 subfamily. In terms of assembly, interacts with DICER1, AGO2, TARBP2, EIF6 and RPL7A (60S ribosome subunit); they form a large RNA-induced silencing complex (RISC). Interacts with APOBEC3G in an RNA-dependent manner. Interacts with TRIM71 (via NHL repeats) in an RNA-dependent manner. Interacts with both protein products of LIRE1, ORF1p and ORF2p. Interacts with TUT4 and, to a lesser extent, TUT7; the interactions are RNA-dependent. Interacts with AGO2, TNRC6B and UPF1; the interactions are direct and RNA-dependent. Interacts with FMR1; this interaction is direct, occurs in an RNA-dependent manner on polysomes and induces association of MOV10 with RNAs. Interacts with SHFL; the interaction increases in presence of RNA. Interacts with DHX34; the interaction is-RNA independent. Interacts with RBM46. Ubiquitinated by the DCX(DCAF12) complex that specifically recognizes the glutamate-leucine (Glu-Leu) degron at the C-terminus, leading to its degradation.

It localises to the cytoplasm. It is found in the P-body. The protein resides in the cytoplasmic ribonucleoprotein granule. Its subcellular location is the stress granule. The protein localises to the nucleus. It catalyses the reaction ATP + H2O = ADP + phosphate + H(+). Its function is as follows. 5' to 3' RNA helicase that is involved in a number of cellular roles ranging from mRNA metabolism and translation, modulation of viral infectivity, inhibition of retrotransposition, or regulation of synaptic transmission. Plays an important role in innate antiviral immunity by promoting type I interferon production. Mechanistically, specifically uses IKKepsilon/IKBKE as the mediator kinase for IRF3 activation. Contributes to UPF1 mRNA target degradation by translocation along 3' UTRs. Required for microRNA (miRNA)-mediated gene silencing by the RNA-induced silencing complex (RISC). Required for both miRNA-mediated translational repression and miRNA-mediated cleavage of complementary mRNAs by RISC. In cooperation with FMR1, regulates miRNA-mediated translational repression by AGO2. Restricts retrotransposition of long interspersed element-1 (LINE-1) in cooperation with TUT4 and TUT7 counteracting the RNA chaperonne activity of L1RE1. Facilitates LINE-1 uridylation by TUT4 and TUT7. Required for embryonic viability and for normal central nervous system development and function. Plays two critical roles in early brain development: suppresses retroelements in the nucleus by directly inhibiting cDNA synthesis, while regulates cytoskeletal mRNAs to influence neurite outgrowth in the cytosol. May function as a messenger ribonucleoprotein (mRNP) clearance factor. The polypeptide is Putative helicase MOV-10 (MOV10) (Bos taurus (Bovine)).